Consider the following 393-residue polypeptide: Pyruvate dehydrogenase E1 component subunit alpha-2, mitochondrial (393 aa).

Residues 1–28 (MALSRLSSRSNTFLKPAITALPSSIRRH) constitute a mitochondrion transit peptide. Pyruvate contacts are provided by H94, Y120, R121, G169, V171, D200, G201, A202, N229, and Y231. Residues Y120, R121, G169, V171, D200, G201, A202, and N229 each contribute to the thiamine diphosphate site. D200 is a binding site for Mg(2+). Positions 229 and 231 each coordinate Mg(2+). H295 provides a ligand contact to thiamine diphosphate.

Tetramer of 2 alpha and 2 beta subunits. It depends on thiamine diphosphate as a cofactor. Mg(2+) is required as a cofactor.

It is found in the mitochondrion matrix. It catalyses the reaction N(6)-[(R)-lipoyl]-L-lysyl-[protein] + pyruvate + H(+) = N(6)-[(R)-S(8)-acetyldihydrolipoyl]-L-lysyl-[protein] + CO2. E1 activity is regulated by phosphorylation (inactivation) and dephosphorylation (activation) of the alpha subunit. In terms of biological role, the pyruvate dehydrogenase complex catalyzes the overall conversion of pyruvate to acetyl-CoA and CO(2). It contains multiple copies of three enzymatic components: pyruvate dehydrogenase (E1), dihydrolipoamide acetyltransferase (E2) and lipoamide dehydrogenase (E3). The protein is Pyruvate dehydrogenase E1 component subunit alpha-2, mitochondrial (IAR4) of Arabidopsis thaliana (Mouse-ear cress).